The following is a 119-amino-acid chain: MANSKRDLFLKRRLRVRNKLKKMADGRPRLSVHRSGKNISVQLIDDVQGRTLAAASSLEKDLGIVGKNNVEASAKVGAAIAERAKKAGIEECYFDRGGFLFHGKVKALADAAREGGLKF.

Belongs to the universal ribosomal protein uL18 family. As to quaternary structure, part of the 50S ribosomal subunit; part of the 5S rRNA/L5/L18/L25 subcomplex. Contacts the 5S and 23S rRNAs.

Functionally, this is one of the proteins that bind and probably mediate the attachment of the 5S RNA into the large ribosomal subunit, where it forms part of the central protuberance. This is Large ribosomal subunit protein uL18 from Dinoroseobacter shibae (strain DSM 16493 / NCIMB 14021 / DFL 12).